The primary structure comprises 341 residues: MLSDRQQMILNAIVDNYIHSAEPVGSRTISKRDDIGFSSATIRNEMSDLEELGYLEQPHTSAGRVPSTKGYRFYVDNLIQPHLLEETELGKLKQLFAERILHAEQVVEYTAQILSQLTNYTAIVLGPEIFEHRLKHIQIVPLNAEQAVAIVVTHTGRVENKLIDLPEGIGAGEIEKLVNLLNAKLTDVPLWQLRQRLYQEISGEMQRHTEQYEEILQLLNNSLTQEEERVYLRGATKIMNQPEFRDVDKVKDILELLEQHDQLMNVIGMQGDGLTVRIGQENQLDAIKQCSIITTSYSLGGKPVGMVGILGPTRMEYGKVITVLNHLAEGLSRMLTSQFEK.

The protein belongs to the HrcA family.

Its function is as follows. Negative regulator of class I heat shock genes (grpE-dnaK-dnaJ and groELS operons). Prevents heat-shock induction of these operons. This is Heat-inducible transcription repressor HrcA from Brevibacillus brevis (strain 47 / JCM 6285 / NBRC 100599).